The sequence spans 215 residues: MKHTSDTPSNSDMPSDSQATQPNASATGQAAHAYSSQAQRASADAQAVAGDEAAVAEAVADVDVAELRRQLEAAEEKARQNYENWARATAEGENIRRRGQDDVAKAHKFAIEGFAEYLLPVMDSLQAALADTSGDATKLREGVELTLKQLYAAFEKGRVTELNPVGEKFDPHRHQAISMVPADQEANTVVAVLQRGYTLADRVLRPALVTVAAPK.

A compositionally biased stretch (polar residues) spans 1 to 28 (MKHTSDTPSNSDMPSDSQATQPNASATG). A disordered region spans residues 1-52 (MKHTSDTPSNSDMPSDSQATQPNASATGQAAHAYSSQAQRASADAQAVAGDE). Over residues 29-52 (QAAHAYSSQAQRASADAQAVAGDE) the composition is skewed to low complexity.

The protein belongs to the GrpE family. As to quaternary structure, homodimer.

The protein localises to the cytoplasm. Participates actively in the response to hyperosmotic and heat shock by preventing the aggregation of stress-denatured proteins, in association with DnaK and GrpE. It is the nucleotide exchange factor for DnaK and may function as a thermosensor. Unfolded proteins bind initially to DnaJ; upon interaction with the DnaJ-bound protein, DnaK hydrolyzes its bound ATP, resulting in the formation of a stable complex. GrpE releases ADP from DnaK; ATP binding to DnaK triggers the release of the substrate protein, thus completing the reaction cycle. Several rounds of ATP-dependent interactions between DnaJ, DnaK and GrpE are required for fully efficient folding. This is Protein GrpE from Ralstonia pickettii (strain 12J).